A 244-amino-acid polypeptide reads, in one-letter code: Small ribosomal subunit protein eS4 (244 aa).

Residues 43-106 enclose the S4 RNA-binding domain; sequence LPLLLIVRDT…NENYLVLFDE (64 aa).

The protein belongs to the eukaryotic ribosomal protein eS4 family.

In Methanococcus vannielii, this protein is Small ribosomal subunit protein eS4 (rps4e).